Reading from the N-terminus, the 1054-residue chain is MGEIEGTYRVLQTAGMRLGAQTPVGVSTLEPGQTLLPRMQEKHLHLRVKLLDNTMEIFDIEPKCDGQVLLTQVWKRLNLVECDYFGMEFQNTQSYWIWLEPMKPIIRQIRRPKNVVLRLAVKFFPPDPGQLQEEYTRYLFALQLKRDLLEERLTCADTTAALLTSHLLQSEIGDYDETLDREHLKVNEYLPGQQHCLEKILEFHQKHVGQTPAESDFQVLEIARKLEMYGIRFHMASDREGTKIQLAVSHMGVLVFQGTTKINTFNWSKVRKLSFKRKRFLIKLHPEVHGPYQDTLEFLLGSRDECKNFWKICVEYHTFFRLLDQPKPKAKAVFFSRGSSFRYSGRTQKQLVDYFKDSGMKRIPYERRHSKTHTSVRALTADLPKQSISFPEGLRTPASPSSANAFYSLSPSTLVPSGLPEFKDSSSSLTDPQVSYVKSPAAERRSGAVAGGPDTPSAQPLGPPALQPGPGLSTKSPQPSPSSRKSPLSLSPAFQVPLGPAEQGSSPLLSPVLSDAGGAGMDCEEPRHKRVPADEAYFIVKEILATERTYLKDLEVITVWFRSAVVKEDAMPATLMTLLFSNIDPIYEFHRGFLREVEQRLALWEGPSKAHTKGSHQRIGDILLRNMRQLKEFTSYFQRHDEVLTELEKATKRCKKLEAVYKEFELQKVCYLPLNTFLLKPIQRLLHYRLLLRRLCGHYSPGHHDYADCHDALKAITEVTTTLQHILIRLENLQKLTELQRDLVGIENLIAPGREFIREGCLHKLTKKGLQQRMFFLFSDMLLYTSKGVAGTSHFRIRGLLPLQGMLVEESDNEWSVPHCFTIYAAQKTIVVAASTRLEKEKWMLDLNSAIQAAKSGGDTAPALPGRTVCTRPPRSPNEVSLEQESEDDARGVRSSLEGHGQHRANTTMHVCWYRNTSVSRADHSAAVENQLSGYLLRKFKNSHGWQKLWVVFTNFCLFFYKTHQDDYPLASLPLLGYSVSIPREADGIHKDYVFKLQFKSHVYFFRAESKYTFERWMEVIQGASSSAGRAPSIVQDGPQPSSGLEGMVRGKEE.

In terms of domain architecture, FERM spans 44 to 324 (LHLRVKLLDN…EYHTFFRLLD (281 aa)). Phosphoserine is present on residues Ser389 and Ser439. Positions 421–527 (EFKDSSSSLT…GAGMDCEEPR (107 aa)) are disordered. Over residues 468–492 (PGPGLSTKSPQPSPSSRKSPLSLSP) the composition is skewed to low complexity. The region spanning 535-726 (EAYFIVKEIL…TEVTTTLQHI (192 aa)) is the DH domain. In terms of domain architecture, PH 1 spans 755–852 (EFIREGCLHK…WMLDLNSAIQ (98 aa)). The interval 856 to 894 (SGGDTAPALPGRTVCTRPPRSPNEVSLEQESEDDARGVR) is disordered. In terms of domain architecture, PH 2 spans 929–1026 (ENQLSGYLLR…WMEVIQGASS (98 aa)). A disordered region spans residues 1029 to 1054 (GRAPSIVQDGPQPSSGLEGMVRGKEE).

In terms of assembly, interacts with PLXNA1. Interaction with PLXNA1 or PIP5K1C lowers its guanine nucleotide exchange activity. Dissociates from PLXNA1 when SEMA3A binds to the receptor. Interacts with PIP5K1C via its FERM domain. The interaction with PIP5K1C is enhanced by SEMA3A binding. Interacts with RAC1.

Functionally, functions as a guanine nucleotide exchange factor that activates RAC1. May have relatively low activity. Plays a role in the response to class 3 semaphorins and remodeling of the actin cytoskeleton. Plays a role in TNFSF11-mediated osteoclast differentiation, especially in podosome rearrangement and reorganization of the actin cytoskeleton. Regulates the activation of ITGB3, integrin signaling and cell adhesion. The sequence is that of FERM, ARHGEF and pleckstrin domain-containing protein 2 (FARP2) from Homo sapiens (Human).